The following is a 588-amino-acid chain: Adenine deaminase (588 aa).

Belongs to the metallo-dependent hydrolases superfamily. Adenine deaminase family. In terms of assembly, homodimer. It depends on Mn(2+) as a cofactor.

The enzyme catalyses adenine + H2O + H(+) = hypoxanthine + NH4(+). The sequence is that of Adenine deaminase from Escherichia coli O157:H7 (strain EC4115 / EHEC).